Reading from the N-terminus, the 151-residue chain is Aspartate carbamoyltransferase regulatory chain (151 aa).

Residues C108, C113, C136, and C139 each contribute to the Zn(2+) site.

It belongs to the PyrI family. Contains catalytic and regulatory chains. Requires Zn(2+) as cofactor.

In terms of biological role, involved in allosteric regulation of aspartate carbamoyltransferase. The protein is Aspartate carbamoyltransferase regulatory chain of Porphyromonas gingivalis (strain ATCC 33277 / DSM 20709 / CIP 103683 / JCM 12257 / NCTC 11834 / 2561).